A 328-amino-acid polypeptide reads, in one-letter code: Radiation response metalloprotease IrrE (328 aa).

A disordered region spans residues 1 to 31; that stretch reads MPSANVSPPCPSGVRGGGMGPKAKAEASKPH. Residue His118 coordinates Zn(2+). The active site involves Glu119. Zn(2+)-binding residues include His122 and Glu149. Disordered stretches follow at residues 217–238 and 309–328; these read PREQ…LTVR and RLGR…DAAQ.

In terms of biological role, plays a central regulatory role in DNA repair and protection pathways in response to radiation stress. Acts as a site-specific metalloprotease that cleaves and inactivates the repressor protein DdrO, resulting in induced expression of genes required for DNA repair and cell survival after exposure to radiation. Regulates the expression of dozens of proteins from different pathways, including the important DNA repair proteins RecA and PprA. Binds to the promoters of recA and pprA. This is Radiation response metalloprotease IrrE from Deinococcus radiodurans (strain ATCC 13939 / DSM 20539 / JCM 16871 / CCUG 27074 / LMG 4051 / NBRC 15346 / NCIMB 9279 / VKM B-1422 / R1).